We begin with the raw amino-acid sequence, 417 residues long: Glutamyl-tRNA reductase (417 aa).

Residues T49–R52, S105, E110–Q112, and Q116 each bind substrate. The Nucleophile role is filled by C50. Residue G185–I190 coordinates NADP(+).

It belongs to the glutamyl-tRNA reductase family. As to quaternary structure, homodimer.

It catalyses the reaction (S)-4-amino-5-oxopentanoate + tRNA(Glu) + NADP(+) = L-glutamyl-tRNA(Glu) + NADPH + H(+). It participates in porphyrin-containing compound metabolism; protoporphyrin-IX biosynthesis; 5-aminolevulinate from L-glutamyl-tRNA(Glu): step 1/2. In terms of biological role, catalyzes the NADPH-dependent reduction of glutamyl-tRNA(Glu) to glutamate 1-semialdehyde (GSA). This is Glutamyl-tRNA reductase from Azoarcus sp. (strain BH72).